The primary structure comprises 266 residues: Phosphonates import ATP-binding protein PhnC (266 aa).

Residues 2–246 form the ABC transporter domain; it reads IEIKNVSKTY…KFAEIYGRPI (245 aa). 35–42 provides a ligand contact to ATP; it reads GLSGAGKS.

This sequence belongs to the ABC transporter superfamily. Phosphonates importer (TC 3.A.1.9.1) family. The complex is composed of two ATP-binding proteins (PhnC), two transmembrane proteins (PhnE) and a solute-binding protein (PhnD).

It localises to the cell membrane. It catalyses the reaction phosphonate(out) + ATP + H2O = phosphonate(in) + ADP + phosphate + H(+). Its function is as follows. Part of the ABC transporter complex PhnCDE involved in phosphonates import. Responsible for energy coupling to the transport system. The sequence is that of Phosphonates import ATP-binding protein PhnC from Shouchella clausii (strain KSM-K16) (Alkalihalobacillus clausii).